The following is a 408-amino-acid chain: Exo-alpha-sialidase ARB_03431 (408 aa).

The signal sequence occupies residues 1–22 (MGIKQWLLSLVVVAISATATQA). Positions 62, 81, 87, and 150 each coordinate substrate. N-linked (GlcNAc...) asparagine glycosylation is present at N237. Residues R267, R324, 324–325 (RT), 333–334 (YD), K339, Y360, D378, and 378–380 (DWY) contribute to the substrate site. N398 is a glycosylation site (N-linked (GlcNAc...) asparagine).

The protein belongs to the glycosyl hydrolase 33 family.

The protein resides in the secreted. The catalysed reaction is Hydrolysis of alpha-(2-&gt;3)-, alpha-(2-&gt;6)-, alpha-(2-&gt;8)- glycosidic linkages of terminal sialic acid residues in oligosaccharides, glycoproteins, glycolipids, colominic acid and synthetic substrates.. Sialidase is able to release sialic acid from a wide variety of natural substrates. The protein is Exo-alpha-sialidase ARB_03431 of Arthroderma benhamiae (strain ATCC MYA-4681 / CBS 112371) (Trichophyton mentagrophytes).